The primary structure comprises 37 residues: Large ribosomal subunit protein bL36 (37 aa).

Belongs to the bacterial ribosomal protein bL36 family.

This chain is Large ribosomal subunit protein bL36, found in Aliivibrio fischeri (strain ATCC 700601 / ES114) (Vibrio fischeri).